The following is a 151-amino-acid chain: Minor curlin subunit (151 aa).

The signal sequence occupies residues 1 to 21; it reads MKNKLLFMMLTILGAPGIATA.

Belongs to the CsgA/CsgB family.

It localises to the fimbrium. Curlin is the structural subunit of the curli. Curli are coiled surface structures that assemble preferentially at growth temperatures below 37 degrees Celsius. Curli can bind to fibronectin. The minor subunit is the nucleation component of curlin monomers. The chain is Minor curlin subunit (csgB) from Salmonella typhi.